We begin with the raw amino-acid sequence, 154 residues long: Transcriptional repressor NrdR (154 aa).

The segment at 3-34 (CPFCGANDTKVIDSRLVAEGEQVRRRRECVAC) is a zinc-finger region. Residues 49 to 139 (PRLIKQDGTR…VYRRFQDLDE (91 aa)) form the ATP-cone domain.

This sequence belongs to the NrdR family. The cofactor is Zn(2+).

Functionally, negatively regulates transcription of bacterial ribonucleotide reductase nrd genes and operons by binding to NrdR-boxes. This Pseudomonas putida (strain ATCC 700007 / DSM 6899 / JCM 31910 / BCRC 17059 / LMG 24140 / F1) protein is Transcriptional repressor NrdR.